The sequence spans 265 residues: uncharacterized protein (265 aa).

The active site involves E47.

This sequence belongs to the PhzF family.

This is an uncharacterized protein from Halalkalibacterium halodurans (strain ATCC BAA-125 / DSM 18197 / FERM 7344 / JCM 9153 / C-125) (Bacillus halodurans).